The primary structure comprises 602 residues: Probable translation initiation factor IF-2 (602 aa).

Positions 15 to 230 constitute a tr-type G domain; it reads LRTPIVAVLG…VLMGLSQRYL (216 aa). A G1 region spans residues 24 to 31; sequence GHVDHGKT. GTP is bound at residue 24–31; the sequence is GHVDHGKT. The interval 49–53 is G2; that stretch reads AITQH. The interval 86–89 is G3; the sequence is DTPG. Residues 86–90 and 140–143 each bind GTP; these read DTPGH and NKID. The G4 stretch occupies residues 140–143; the sequence is NKID. Residues 208 to 210 form a G5 region; that stretch reads SAE.

The protein belongs to the TRAFAC class translation factor GTPase superfamily. Classic translation factor GTPase family. IF-2 subfamily.

Functionally, function in general translation initiation by promoting the binding of the formylmethionine-tRNA to ribosomes. Seems to function along with eIF-2. This Natronomonas pharaonis (strain ATCC 35678 / DSM 2160 / CIP 103997 / JCM 8858 / NBRC 14720 / NCIMB 2260 / Gabara) (Halobacterium pharaonis) protein is Probable translation initiation factor IF-2.